Consider the following 636-residue polypeptide: Probable potassium transport system protein Kup (636 aa).

The next 12 helical transmembrane spans lie at 22 to 42, 64 to 84, 114 to 134, 150 to 170, 182 to 202, 220 to 240, 261 to 281, 293 to 313, 351 to 371, 383 to 403, 408 to 428, and 433 to 453; these read MGLL…SPLY, ILSL…VMFI, ALMV…SMIT, FEGI…ALFL, LFGP…VHGI, FFIV…LALT, WFAL…AILL, LLAP…ATVI, IYIG…VIGF, VAVT…MLLL, PVLA…FFAA, and IVQG…LMST.

Belongs to the HAK/KUP transporter (TC 2.A.72) family.

The protein resides in the cell inner membrane. It catalyses the reaction K(+)(in) + H(+)(in) = K(+)(out) + H(+)(out). Functionally, transport of potassium into the cell. Likely operates as a K(+):H(+) symporter. In Pseudomonas entomophila (strain L48), this protein is Probable potassium transport system protein Kup.